Reading from the N-terminus, the 297-residue chain is Nitrogenase iron protein 2 (297 aa).

14–21 (GKGGIGKS) is an ATP binding site. Position 102 (C102) interacts with [4Fe-4S] cluster. The residue at position 105 (R105) is an ADP-ribosylarginine; by dinitrogenase reductase ADP-ribosyltransferase. A [4Fe-4S] cluster-binding site is contributed by C136.

Belongs to the NifH/BchL/ChlL family. In terms of assembly, homodimer. [4Fe-4S] cluster is required as a cofactor. Post-translationally, the reversible ADP-ribosylation of Arg-105 inactivates the nitrogenase reductase and regulates nitrogenase activity.

The catalysed reaction is N2 + 8 reduced [2Fe-2S]-[ferredoxin] + 16 ATP + 16 H2O = H2 + 8 oxidized [2Fe-2S]-[ferredoxin] + 2 NH4(+) + 16 ADP + 16 phosphate + 6 H(+). In terms of biological role, the key enzymatic reactions in nitrogen fixation are catalyzed by the nitrogenase complex, which has 2 components: the iron protein and the molybdenum-iron protein. The sequence is that of Nitrogenase iron protein 2 (nifH2) from Nostoc sp. (strain PCC 7120 / SAG 25.82 / UTEX 2576).